The sequence spans 330 residues: MATH domain and coiled-coil domain-containing protein At3g58210 (330 aa).

One can recognise an MATH domain in the interval 6–133 (DNKFTWVIQN…NDELKIVAEV (128 aa)). A coiled-coil region spans residues 263–314 (FKVDWLEKKLEEVKKKKEEEQTGEARIQELEEELKEFKQKCLDREAMLEKEK).

The sequence is that of MATH domain and coiled-coil domain-containing protein At3g58210 from Arabidopsis thaliana (Mouse-ear cress).